A 121-amino-acid polypeptide reads, in one-letter code: Darcynin homolog (121 aa).

The protein belongs to the darcynin family.

The sequence is that of Darcynin homolog from Streptomyces avermitilis (strain ATCC 31267 / DSM 46492 / JCM 5070 / NBRC 14893 / NCIMB 12804 / NRRL 8165 / MA-4680).